A 1099-amino-acid polypeptide reads, in one-letter code: 1-phosphatidylinositol 4,5-bisphosphate phosphodiesterase 1 (1099 aa).

Residues 1–10 (MLESLNRRNS) are compositionally biased toward basic and acidic residues. Disordered stretches follow at residues 1–109 (MLES…SSTT) and 128–164 (ESRS…KSIQ). Composition is skewed to low complexity over residues 43-66 (PPKS…KSDL) and 86-109 (PKQQ…SSTT). A compositionally biased stretch (polar residues) spans 131–141 (SIVSNNGGSPM). The span at 142–155 (SDSTTVTSTLSTDT) shows a compositional bias: low complexity. Residues 566 to 726 (YDYPLNEYFI…LKHKFIIKVK (161 aa)) enclose the PI-PLC X-box domain. Residues histidine 579 and histidine 642 contribute to the active site. The substrate site is built by lysine 724 and lysine 726. The segment at 742–780 (FTTSTTTTTTTTTTTTTATSLSEDNENNKSNSSSTSSFI) is disordered. Residues 743 to 778 (TTSTTTTTTTTTTTTTATSLSEDNENNKSNSSSTSS) are compositionally biased toward low complexity. In terms of domain architecture, PI-PLC Y-box spans 794-912 (ELSNLGIYTQ…GYVLKPSVLR (119 aa)). Substrate-binding residues include serine 823 and arginine 852. The region spanning 917 to 1071 (KSSSSNVDTR…QGYRYIYLND (155 aa)) is the C2 domain.

It catalyses the reaction a 1,2-diacyl-sn-glycero-3-phospho-(1D-myo-inositol-4,5-bisphosphate) + H2O = 1D-myo-inositol 1,4,5-trisphosphate + a 1,2-diacyl-sn-glycerol + H(+). The production of the second messenger molecules diacylglycerol (DAG) and inositol 1,4,5-trisphosphate (IP3) is mediated by activated phosphatidylinositol-specific phospholipase C enzymes. This Candida albicans (Yeast) protein is 1-phosphatidylinositol 4,5-bisphosphate phosphodiesterase 1 (PLC1).